The primary structure comprises 344 residues: MTNFYKVFLAVFILVCCNISQAAVSFIGSTENDVGPSPGSYSRTHAMDNLPFVYNTGNNIGYQNANVWRISKGFCVGLDGKVDLPVVGSLDGQSIYGLTEEVGLLIWMGDTNYSRGTAMSGNSWENVFSGWCVGANTASTQGLSVRVTPVILKRNSSARYSVQKTSIGSIRMRPYNGSSAGSVQTTVNFSLNPFTLNDTVTSCRLLTPSAVNVSLAAISAGQLPSSGDEVVAGTTSLKLQCDAGVTVWATLTDATTPSNRSDILTLTGASTATGVGLRIYKNTDSTPLKFGPDSPVKGNENQWQLSTGTETSPSVRLYVKYVNTGEGINPGTVNGISTFTFSYQ.

Positions 1 to 22 are cleaved as a signal peptide; it reads MTNFYKVFLAVFILVCCNISQA. Residues 23 to 199 form a receptor-binding lectin domain region; sequence AVSFIGSTEN…SLNPFTLNDT (177 aa). A carbohydrate contacts are provided by residues 65–66, 110–111, and 139–142; these read AN, DT, and STQG. Cys-75 and Cys-132 are disulfide-bonded. Residues 200 to 344 are fimbrillin-binding domain; it reads VTSCRLLTPS…GISTFTFSYQ (145 aa). Positions 288–308 are disordered; that stretch reads LKFGPDSPVKGNENQWQLSTG. A compositionally biased stretch (polar residues) spans 299–308; that stretch reads NENQWQLSTG.

This sequence belongs to the fimbrial protein family.

The protein resides in the fimbrium. Its function is as follows. Essential fimbrial adhesion factor that mediates binding to N-acetylglucosamine-containing receptors in the host intestinal microvilli, leading to colonization of the intestinal tissue, and diarrhea or septicemia. Also confers adhesiveness to laminin and basement membranes. The sequence is that of F17d-G fimbrial adhesin (f17dG) from Escherichia coli.